Reading from the N-terminus, the 204-residue chain is Tetraspanin-13 (204 aa).

The Cytoplasmic segment spans residues 1-19 (MVCGGFACSKNCLCALNLL). The helical transmembrane segment at 20–40 (YTLVSLLLIGIAAWGIGFGLI) threads the bilayer. Topologically, residues 41–44 (SSLR) are extracellular. Residues 45–65 (VVGVVIAVGIFLFLIALVGLI) traverse the membrane as a helical segment. At 66 to 72 (GAVKHHQ) the chain is on the cytoplasmic side. Residues 73–93 (VLLFFYMIILLLVFIVQFSVS) traverse the membrane as a helical segment. Topologically, residues 94–167 (CACLALNQEQ…IGRYAGEVLR (74 aa)) are extracellular. 2 N-linked (GlcNAc...) asparagine glycosylation sites follow: N113 and N137. A Phosphoserine modification is found at S143. Residues 168–188 (FVGGIGLFFSFTEILGVWLTY) form a helical membrane-spanning segment. Over 189–204 (RYRNQKDPRANPSAFL) the chain is Cytoplasmic.

It belongs to the tetraspanin (TM4SF) family.

The protein resides in the membrane. The sequence is that of Tetraspanin-13 (TSPAN13) from Bos taurus (Bovine).